The sequence spans 192 residues: Elongation factor P (192 aa).

The protein belongs to the elongation factor P family.

The protein localises to the cytoplasm. The protein operates within protein biosynthesis; polypeptide chain elongation. Its function is as follows. Involved in peptide bond synthesis. Stimulates efficient translation and peptide-bond synthesis on native or reconstituted 70S ribosomes in vitro. Probably functions indirectly by altering the affinity of the ribosome for aminoacyl-tRNA, thus increasing their reactivity as acceptors for peptidyl transferase. In Aquifex aeolicus (strain VF5), this protein is Elongation factor P (efp).